Reading from the N-terminus, the 346-residue chain is Heat-inducible transcription repressor HrcA (346 aa).

It belongs to the HrcA family.

Its function is as follows. Negative regulator of class I heat shock genes (grpE-dnaK-dnaJ and groELS operons). Prevents heat-shock induction of these operons. This chain is Heat-inducible transcription repressor HrcA, found in Fructilactobacillus sanfranciscensis (Lactobacillus sanfranciscensis).